Consider the following 376-residue polypeptide: Peroxisomal membrane protein PEX27 (376 aa).

In terms of assembly, homooligomer. Interacts with PEX25 and PEX34.

The protein localises to the peroxisome membrane. Required for regulation of peroxisome size and number. Also promotes peroxisome division and biogenesis. The protein is Peroxisomal membrane protein PEX27 (PEX27) of Saccharomyces cerevisiae (strain ATCC 204508 / S288c) (Baker's yeast).